The following is a 377-amino-acid chain: tRNA(Met) cytidine acetate ligase (377 aa).

ATP is bound by residues 7–20 (ITEYNPFHNGHLYH), G101, N152, and R179.

The protein belongs to the TmcAL family.

It localises to the cytoplasm. The catalysed reaction is cytidine(34) in elongator tRNA(Met) + acetate + ATP = N(4)-acetylcytidine(34) in elongator tRNA(Met) + AMP + diphosphate. In terms of biological role, catalyzes the formation of N(4)-acetylcytidine (ac(4)C) at the wobble position of elongator tRNA(Met), using acetate and ATP as substrates. First activates an acetate ion to form acetyladenylate (Ac-AMP) and then transfers the acetyl group to tRNA to form ac(4)C34. The sequence is that of tRNA(Met) cytidine acetate ligase from Oenococcus oeni (strain ATCC BAA-331 / PSU-1).